Consider the following 485-residue polypeptide: Acyltransferase cm3D (485 aa).

Histidine 169 functions as the Proton acceptor in the catalytic mechanism.

It belongs to the plant acyltransferase family. In terms of assembly, monomer.

It participates in secondary metabolite biosynthesis. In terms of biological role, acyltransferase; part of the gene cluster that mediates the biosynthesis of beauveriolides I and III, cyclodepsipeptides acting as inhibitors of the acyl-CoA:cholesterol acyltransferase. The HR-PKS cm3B initiates the biosynthesis of beauveriolides by iteratively catalyzing the formation of the linear polyketide chain. The ATP-dependent acetyl-CoA ligase cm3D converts the polyketide carboxylic acid to a CoA thioester which id shuttled to the first T domain in the NRPS cm3A by the acetyltransferase cm3C. Cm3A contains 13 domains and assembles the polyketide chain, L-phenylalanine, L-alanine, and D-leucine (or D-allo-isoleucine) to form beauveriolide I (or beauveriolide III). The production of both beauveriolides I and III suggests the substrate adaptability of cm3B, using different amino acids as substrates. The protein is Acyltransferase cm3D of Cordyceps militaris (strain CM01) (Caterpillar fungus).